The sequence spans 188 residues: Trafficking protein particle complex subunit 5 (188 aa).

The protein belongs to the TRAPP small subunits family. BET3 subfamily. Part of the multisubunit TRAPP (transport protein particle) complex.

Its subcellular location is the golgi apparatus. It localises to the cis-Golgi network. It is found in the endoplasmic reticulum. Functionally, may play a role in vesicular transport from endoplasmic reticulum to Golgi. This is Trafficking protein particle complex subunit 5 (TRAPPC5) from Gallus gallus (Chicken).